Consider the following 1478-residue polypeptide: GTPase-activating protein and VPS9 domain-containing protein 1 (1478 aa).

The Ras-GAP domain occupies 147–385 (SYLLQVLRYL…AAFLDVVIGG (239 aa)). Phosphoserine is present on Ser-227. A phosphothreonine mark is found at Thr-390 and Thr-458. Phosphotyrosine is present on Tyr-460. Phosphoserine is present on Ser-466. Thr-470 is modified (phosphothreonine). Residues Ser-566 and Ser-569 each carry the phosphoserine modification. Disordered regions lie at residues 574 to 608 (GISE…GSNG), 739 to 820 (ESCS…PPSQ), and 846 to 874 (HYAR…LPNF). Residues 578 to 588 (GPSNRSNSVSS) show a composition bias toward polar residues. Phosphoserine is present on residues Ser-742, Ser-746, and Ser-757. Residues 758-777 (SRPSTPGLSVVSGISATSED) show a composition bias toward polar residues. Residue Thr-762 is modified to Phosphothreonine. Ser-766 carries the phosphoserine modification. Residues 778–789 (IPNKIEDLRSEC) are compositionally biased toward basic and acidic residues. Phosphoserine is present on residues Ser-876, Ser-902, Ser-903, Ser-908, Ser-914, and Ser-966. The segment covering 889–902 (QRHSYPERLVRSRS) has biased composition (basic and acidic residues). 2 disordered regions span residues 889-1023 (QRHS…PRLS) and 1043-1064 (TSPS…DRDL). 2 stretches are compositionally biased toward basic and acidic residues: residues 954-975 (DSSR…DRNR) and 997-1008 (EKQEKDKDDLGP). A compositionally biased stretch (polar residues) spans 1012–1023 (STLTDDPSPRLS). Ser-1019, Ser-1046, Ser-1096, and Ser-1103 each carry phosphoserine. One can recognise a VPS9 domain in the interval 1338–1478 (ILRDQVLHEH…EFIKTIDDRK (141 aa)).

The protein belongs to the GAPVD1 family. In terms of assembly, interacts with TRIP10/CIP4. Interacts with RAB5A. As to quaternary structure, (Microbial infection) Interacts with P.falciparum (strain 3D7) CK1. Expressed in erythrocytes (at protein level).

Its subcellular location is the membrane. It is found in the endosome. Functionally, acts both as a GTPase-activating protein (GAP) and a guanine nucleotide exchange factor (GEF), and participates in various processes such as endocytosis, insulin receptor internalization or LC2A4/GLUT4 trafficking. Acts as a GEF for the Ras-related protein RAB31 by exchanging bound GDP for free GTP, leading to regulate LC2A4/GLUT4 trafficking. In the absence of insulin, it maintains RAB31 in an active state and promotes a futile cycle between LC2A4/GLUT4 storage vesicles and early endosomes, retaining LC2A4/GLUT4 inside the cells. Upon insulin stimulation, it is translocated to the plasma membrane, releasing LC2A4/GLUT4 from intracellular storage vesicles. Also involved in EGFR trafficking and degradation, possibly by promoting EGFR ubiquitination and subsequent degradation by the proteasome. Has GEF activity for Rab5 and GAP activity for Ras. The polypeptide is GTPase-activating protein and VPS9 domain-containing protein 1 (GAPVD1) (Homo sapiens (Human)).